A 235-amino-acid polypeptide reads, in one-letter code: 2,3,4,5-tetrahydropyridine-2,6-dicarboxylate N-acetyltransferase (235 aa).

The protein belongs to the transferase hexapeptide repeat family. DapH subfamily.

It carries out the reaction (S)-2,3,4,5-tetrahydrodipicolinate + acetyl-CoA + H2O = L-2-acetamido-6-oxoheptanedioate + CoA. It functions in the pathway amino-acid biosynthesis; L-lysine biosynthesis via DAP pathway; LL-2,6-diaminopimelate from (S)-tetrahydrodipicolinate (acetylase route): step 1/3. Functionally, catalyzes the transfer of an acetyl group from acetyl-CoA to tetrahydrodipicolinate. The protein is 2,3,4,5-tetrahydropyridine-2,6-dicarboxylate N-acetyltransferase of Exiguobacterium sibiricum (strain DSM 17290 / CCUG 55495 / CIP 109462 / JCM 13490 / 255-15).